The sequence spans 180 residues: Outer-membrane lipoprotein LolB (180 aa).

The first 16 residues, 1 to 16 (MIRRVLLLSLALLLAG), serve as a signal peptide directing secretion. Cysteine 17 carries the N-palmitoyl cysteine lipid modification. Residue cysteine 17 is the site of S-diacylglycerol cysteine attachment.

Belongs to the LolB family. As to quaternary structure, monomer.

It is found in the cell outer membrane. Plays a critical role in the incorporation of lipoproteins in the outer membrane after they are released by the LolA protein. The protein is Outer-membrane lipoprotein LolB of Chromobacterium violaceum (strain ATCC 12472 / DSM 30191 / JCM 1249 / CCUG 213 / NBRC 12614 / NCIMB 9131 / NCTC 9757 / MK).